Consider the following 22-residue polypeptide: Conantokin-Oc (22 aa).

The interval 1–22 (GEEERKAMAELEAKKAQEALKA) is disordered. Residues glutamate 3, glutamate 4, glutamate 10, and glutamate 18 each carry the 4-carboxyglutamate modification.

As to expression, expressed by the venom duct.

The protein resides in the secreted. Its function is as follows. Conantokins inhibit N-methyl-D-aspartate (NMDA) receptors. The polypeptide is Conantokin-Oc (Conus ochroleucus (Perfect cone)).